The chain runs to 687 residues: Chloride channel protein ClC-Kb (687 aa).

Residues 1–50 lie on the Cytoplasmic side of the membrane; sequence MEEFVGLREGSSGNPVTLQELWGPCPRIRRGIRGGLEWLKQKLFRLGEDW. Transmembrane regions (helical) follow at residues 51 to 82 and 91 to 111; these read YFLM…QWLY and LRYL…SGFS. The segment at residues 116–127 is an intramembrane region (helical); sequence PSSGGSGIPEVK. A chloride-binding site is contributed by serine 121. 2 helical membrane passes run 141–160 and 161–180; these read IKNF…CGST and LFLG…AAYL. Asparagine 193 is a glycosylation site (N-linked (GlcNAc...) asparagine). An intramembrane region (helical) is located at residues 203–224; the sequence is AAAAVGVATVFAAPFSGVLFSI. Residues 236–255 form a helical membrane-spanning segment; the sequence is YWRGFFAATCGAFMFRLLAV. Ca(2+) is bound by residues glutamate 259, glutamate 261, aspartate 278, and glutamate 281. A run of 2 helical transmembrane segments spans residues 282-310 and 325-342; these read IFFF…FGFI and PVYS…TYPP. The helical intramembrane region spans 349–360; that stretch reads ASRLSMKQHLDS. The next 2 helical transmembrane spans lie at 400 to 420 and 421 to 440; these read GTLA…TTIP and MPAG…GRLF. Phenylalanine 426 provides a ligand contact to chloride. Residues 464 to 496 constitute an intramembrane region (helical); sequence GGYALAGAAAFSGAVTHTISTALLAFEVTGQIV. A helical membrane pass occupies residues 500–520; that stretch reads PVLMAVLAANAIAQSCQPSFY. At 521–687 the chain is on the cytoplasmic side; sequence DGTVIVKKLP…SNLTNPPAPK (167 aa). CBS domains follow at residues 551–609 and 626–684; these read MNHS…EPPS and CPTE…TNPP.

It belongs to the chloride channel (TC 2.A.49) family. CLCNKB subfamily. Homodimer. Interacts with BSND. Post-translationally, N-glycosylated.

The protein resides in the basolateral cell membrane. The catalysed reaction is chloride(in) = chloride(out). The enzyme catalyses iodide(out) = iodide(in). It catalyses the reaction nitrate(in) = nitrate(out). It carries out the reaction bromide(in) = bromide(out). Its activity is regulated as follows. Activated by extracellular Ca(2+) and inhibited by extracellular acidic pH. Anion-selective channel permeable to small monovalent anions with ion selectivity for chloride &gt; bromide &gt; nitrate &gt; iodide. Forms a homodimeric channel where each subunit has its own ion conduction pathway. May conduct double-barreled currents controlled by two types of gates, two fast gates that control each subunit independently and a slow common gate that opens and shuts off both subunits simultaneously. Assembles with the regulatory subunit BSND/Barttin for sorting at the basolateral plasma membrane domain and functional switch to the ion conducting state. CLCNKB:BSND channels display mostly a linear current-voltage relationship controlled by common gate. Mediates chloride conductance along nephron segments, namely the thick ascending limb of Henle's loop, convoluted tubule and the collecting duct, contributing to the maintenance of systemic acid-base and electrolyte homeostasis. Conducts chloride currents in the stria vascularis of the inner ear to establish the endocochlear potential necessary for normal hearing. The sequence is that of Chloride channel protein ClC-Kb from Homo sapiens (Human).